A 557-amino-acid polypeptide reads, in one-letter code: Pre-mRNA-processing protein 45 (557 aa).

Disordered regions lie at residues 1–32 (MALL…TSHA), 208–243 (EQDP…KVSA), and 316–444 (MAEK…MSSD). Acidic residues predominate over residues 16–25 (DFDDEEEDYV). Pro residues predominate over residues 224-235 (RGPPSPPPPVLH). Phosphoserine is present on residues serine 228 and serine 236. The span at 316–327 (MAEKEKQEKEQR) shows a compositional bias: basic and acidic residues. Residue serine 376 is modified to Phosphoserine. The segment covering 386-430 (EAFRRRQELRRERRRQAEKDLRLSRMGAEKRAKLAEKDRPRDVAE) has biased composition (basic and acidic residues).

The protein belongs to the SNW family. As to quaternary structure, homodimer. Interacts with cyp1 and the small 23 kDa subunit of the splicing factor U2AF (u2af23). Belongs to the 40S cdc5-associated complex (or cwf complex), a spliceosome sub-complex reminiscent of a late-stage spliceosome composed of the U2, U5 and U6 snRNAs and at least brr2, cdc5, cwf2/prp3, cwf3/syf1, cwf4/syf3, cwf5/ecm2, spp42/cwf6, cwf7/spf27, cwf8, cwf9, cwf10, cwf11, cwf12, prp45/cwf13, cwf14, cwf15, cwf16, cwf17, cwf18, cwf19, cwf20, cwf21, cwf22, cwf23, cwf24, cwf25, cwf26, cyp7/cwf27, cwf28, cwf29/ist3, lea1, msl1, prp5/cwf1, prp10, prp12/sap130, prp17, prp22, sap61, sap62, sap114, sap145, slu7, smb1, smd1, smd3, smf1, smg1 and syf2.

It localises to the nucleus. Involved in pre-mRNA splicing. The chain is Pre-mRNA-processing protein 45 (prp45) from Schizosaccharomyces pombe (strain 972 / ATCC 24843) (Fission yeast).